The sequence spans 343 residues: tRNA N6-adenosine threonylcarbamoyltransferase (343 aa).

Fe cation-binding residues include His-116 and His-120. Substrate is bound by residues 138–142 (LVSGG), Asp-171, Gly-184, Asp-188, and Asn-277. Asp-306 contributes to the Fe cation binding site.

It belongs to the KAE1 / TsaD family. Fe(2+) is required as a cofactor.

The protein resides in the cytoplasm. The catalysed reaction is L-threonylcarbamoyladenylate + adenosine(37) in tRNA = N(6)-L-threonylcarbamoyladenosine(37) in tRNA + AMP + H(+). In terms of biological role, required for the formation of a threonylcarbamoyl group on adenosine at position 37 (t(6)A37) in tRNAs that read codons beginning with adenine. Is involved in the transfer of the threonylcarbamoyl moiety of threonylcarbamoyl-AMP (TC-AMP) to the N6 group of A37, together with TsaE and TsaB. TsaD likely plays a direct catalytic role in this reaction. This is tRNA N6-adenosine threonylcarbamoyltransferase from Ligilactobacillus salivarius (strain UCC118) (Lactobacillus salivarius).